The primary structure comprises 437 residues: Trigger factor (437 aa).

Residues 161 to 246 (GDQVNINFVG…VNSVSEAVLP (86 aa)) enclose the PPIase FKBP-type domain.

It belongs to the FKBP-type PPIase family. Tig subfamily.

The protein resides in the cytoplasm. It catalyses the reaction [protein]-peptidylproline (omega=180) = [protein]-peptidylproline (omega=0). In terms of biological role, involved in protein export. Acts as a chaperone by maintaining the newly synthesized protein in an open conformation. Functions as a peptidyl-prolyl cis-trans isomerase. This Cellvibrio japonicus (strain Ueda107) (Pseudomonas fluorescens subsp. cellulosa) protein is Trigger factor.